Reading from the N-terminus, the 571-residue chain is Isocitrate dehydrogenase kinase/phosphatase 2 (571 aa).

Residues 313–319 and Lys-334 each bind ATP; that span reads APGTPGM. Residue Asp-369 is part of the active site.

It belongs to the AceK family.

The protein localises to the cytoplasm. It catalyses the reaction L-seryl-[isocitrate dehydrogenase] + ATP = O-phospho-L-seryl-[isocitrate dehydrogenase] + ADP + H(+). Functionally, bifunctional enzyme which can phosphorylate or dephosphorylate isocitrate dehydrogenase (IDH) on a specific serine residue. This is a regulatory mechanism which enables bacteria to bypass the Krebs cycle via the glyoxylate shunt in response to the source of carbon. When bacteria are grown on glucose, IDH is fully active and unphosphorylated, but when grown on acetate or ethanol, the activity of IDH declines drastically concomitant with its phosphorylation. This is Isocitrate dehydrogenase kinase/phosphatase 2 from Pseudoalteromonas translucida (strain TAC 125).